A 376-amino-acid polypeptide reads, in one-letter code: Hydroxylysine kinase (376 aa).

D229 acts as the Proton acceptor in catalysis.

The protein belongs to the aminoglycoside phosphotransferase family.

Its subcellular location is the cytoplasm. The catalysed reaction is (5R)-5-hydroxy-L-lysine + GTP = (5R)-5-phosphooxy-L-lysine + GDP + H(+). Its function is as follows. Catalyzes the GTP-dependent phosphorylation of 5-hydroxy-L-lysine. In Mus musculus (Mouse), this protein is Hydroxylysine kinase (Hykk).